Consider the following 142-residue polypeptide: Cellulose/chitin binding protein BQ2027_MB2009 (142 aa).

The first 37 residues, 1 to 37 (MAGLNIYVRRWRTALHATVSALIVAILGLAITPVASA), serve as a signal peptide directing secretion. Residues 38 to 142 (ATARATLSVT…CLLNGQYPCT (105 aa)) enclose the CBM2 domain.

The protein resides in the secreted. Its subcellular location is the cell wall. It localises to the cell membrane. Functionally, carbohydrate binding protein that binds chitin and cellulose. Lacks enzymatic activity and does not hydrolyze chitin and cellulose. May interact with mycobacterial biofilms, which are rich in cellulose, and play a role in biofilm formation. Could also act as an adhesin, improving the initial attachment to host cells and aiding M.bovis during the initial stages of infection. Its function is as follows. May act as a virulence factor that modulates host immune responses and contributes to host immune evasion. The protein is Cellulose/chitin binding protein BQ2027_MB2009 of Mycobacterium bovis (strain ATCC BAA-935 / AF2122/97).